Here is a 1435-residue protein sequence, read N- to C-terminus: Dicer-like protein 2 (1435 aa).

One can recognise a Helicase ATP-binding domain in the interval 54-234 (MLSESLRQNI…LEVLEINLNA (181 aa)). Residue 67–74 (MDTGSGKT) coordinates ATP. Positions 175 to 178 (DEAH) match the DEAH box motif. One can recognise a Helicase C-terminal domain in the interval 400-564 (KLIDFLVLEH…ENKRALEHIQ (165 aa)). The region spanning 591–684 (ARNHLSHFCG…MPAHHHIDDE (94 aa)) is the Dicer dsRNA-binding fold domain. RNase III domains lie at 956 to 1099 (ANEL…IDGG) and 1141 to 1323 (LSEI…IDSQ). 3 residues coordinate Mg(2+): Glu1178, Asp1309, and Glu1312.

It belongs to the helicase family. Dicer subfamily. The cofactor is Mg(2+). Requires Mn(2+) as cofactor.

Functionally, dicer-like endonuclease involved in cleaving double-stranded RNA in the RNA interference (RNAi) pathway. Produces 21 to 25 bp dsRNAs (siRNAs) which target the selective destruction of homologous RNAs leading to sequence-specific suppression of gene expression, called post-transcriptional gene silencing (PTGS). Part of a broad host defense response against viral infection and transposons. The chain is Dicer-like protein 2 (DCL2) from Coccidioides immitis (strain RS) (Valley fever fungus).